Consider the following 181-residue polypeptide: Isopentenyl-diphosphate Delta-isomerase (181 aa).

Mn(2+) contacts are provided by H25 and H32. One can recognise a Nudix hydrolase domain in the interval 30–164; it reads LLHLAFSCWL…PWAFSPWMVL (135 aa). The active site involves C67. A Mn(2+)-binding site is contributed by H69. Mg(2+) is bound at residue E87. Residues E114 and E116 each coordinate Mn(2+). E116 is an active-site residue.

It belongs to the IPP isomerase type 1 family. As to quaternary structure, homodimer. Requires Mg(2+) as cofactor. The cofactor is Mn(2+).

The protein localises to the cytoplasm. The enzyme catalyses isopentenyl diphosphate = dimethylallyl diphosphate. Its pathway is isoprenoid biosynthesis; dimethylallyl diphosphate biosynthesis; dimethylallyl diphosphate from isopentenyl diphosphate: step 1/1. Catalyzes the 1,3-allylic rearrangement of the homoallylic substrate isopentenyl (IPP) to its highly electrophilic allylic isomer, dimethylallyl diphosphate (DMAPP). The sequence is that of Isopentenyl-diphosphate Delta-isomerase from Citrobacter koseri (strain ATCC BAA-895 / CDC 4225-83 / SGSC4696).